A 327-amino-acid polypeptide reads, in one-letter code: 2-methoxy-6-polyprenyl-1,4-benzoquinol methylase, mitochondrial (327 aa).

The N-terminal 49 residues, 1-49 (MAAPRSCALWSYCGRGWSWAMRGCQLLGLRSSWPGAPLSARLLPQEKRA), are a transit peptide targeting the mitochondrion. S-adenosyl-L-methionine contacts are provided by residues Thr-117, Asp-171, and 199 to 200 (DA).

It belongs to the class I-like SAM-binding methyltransferase superfamily. MenG/UbiE family. As to quaternary structure, component of a multi-subunit COQ enzyme complex, composed of at least COQ3, COQ4, COQ5, COQ6, COQ7 and COQ9. Interacts with PYURF; the interaction is direct, stabilizes COQ5 protein and associates PYURF with COQ enzyme complex.

It is found in the mitochondrion inner membrane. The enzyme catalyses 2-methoxy-6-(all-trans-decaprenyl)benzene-1,4-diol + S-adenosyl-L-methionine = 5-methoxy-2-methyl-3-(all-trans-decaprenyl)benzene-1,4-diol + S-adenosyl-L-homocysteine + H(+). The protein operates within cofactor biosynthesis; ubiquinone biosynthesis. Methyltransferase required for the conversion of 2-decaprenyl-6-methoxy-1,4-benzoquinol (DDMQH2) to 2-decaprenyl-3-methyl-6-methoxy-1,4-benzoquinol (DMQH2). The polypeptide is 2-methoxy-6-polyprenyl-1,4-benzoquinol methylase, mitochondrial (Pongo abelii (Sumatran orangutan)).